The sequence spans 316 residues: Melanocyte-stimulating hormone receptor (316 aa).

The Extracellular segment spans residues 1–37; sequence MAVQGSQRRLLGSLNSTPTAIPQLGLAANQTGARCLE. N29 is a glycosylation site (N-linked (GlcNAc...) asparagine). Residues 38–63 form a helical membrane-spanning segment; that stretch reads VSIPDGLFLSLGLVSLVENVLVVATI. Over 64–72 the chain is Cytoplasmic; that stretch reads AKNRNLHSP. The chain crosses the membrane as a helical span at residues 73–93; that stretch reads MYCFICCLALSDLLVSGSNVV. Topologically, residues 94–117 are extracellular; it reads DTLLLLLEAGALAARAAVLQQLDN. Residues 118–139 traverse the membrane as a helical segment; the sequence is VIDVITCSSMLSSLCFLGAIAV. The Cytoplasmic segment spans residues 140–162; that stretch reads DRYISIFYALRYRSIVTLPRARR. A helical membrane pass occupies residues 163–182; that stretch reads AVAAIWVASVLFSTLFIAYY. The Extracellular portion of the chain corresponds to 183–190; the sequence is DHTAVLLC. Residues 191–210 traverse the membrane as a helical segment; the sequence is LVVFFLAMLVLMAVLYVHML. At 211–239 the chain is on the cytoplasmic side; sequence ARACQHAQGIARLHKRQRPVHKGFGLKGP. Residues 240–265 form a helical membrane-spanning segment; that stretch reads VTLTILLGIFFLCWGPFFLHLTLIVL. The Extracellular portion of the chain corresponds to 266–278; the sequence is CPEHPTCGCIFKN. The helical transmembrane segment at 279–299 threads the bilayer; it reads FNLFLALIICNAIIDPLIYAF. Topologically, residues 300-316 are cytoplasmic; the sequence is HSQELRRTLKEVLTCSW. C314 carries the S-palmitoyl cysteine lipid modification.

The protein belongs to the G-protein coupled receptor 1 family. As to quaternary structure, interacts with MGRN1, but does not undergo MGRN1-mediated ubiquitination; this interaction competes with GNAS-binding and thus inhibits agonist-induced cAMP production. Interacts with OPN3; the interaction results in a decrease in MC1R-mediated cAMP signaling and ultimately a decrease in melanin production in melanocytes.

It localises to the cell membrane. Receptor for MSH (alpha, beta and gamma) and ACTH. The activity of this receptor is mediated by G proteins which activate adenylate cyclase. Mediates melanogenesis, the production of eumelanin (black/brown) and phaeomelanin (red/yellow), via regulation of cAMP signaling in melanocytes. The sequence is that of Melanocyte-stimulating hormone receptor (MC1R) from Gorilla gorilla gorilla (Western lowland gorilla).